The following is a 1167-amino-acid chain: Integrin alpha-E (1167 aa).

A signal peptide spans 1–19; the sequence is MKWLFHTLLCMASLKPQGA. The Extracellular segment spans residues 20-1114; that stretch reads FNLDVDWAWV…IFLKEEETRS (1095 aa). 2 FG-GAP repeats span residues 27-81 and 84-142; these read AWVT…PDEI and QPVE…LQAQ. The N-linked (GlcNAc...) asparagine glycan is linked to asparagine 51. 2 disulfides stabilise this stretch: cysteine 72/cysteine 83 and cysteine 130/cysteine 164. Residues 149-192 are X-domain (extra domain); sequence EGFLDPGAHVDSGDYCRSKGGSTGEEKKSARRRRTVEEEDEEED. The tract at residues 163–191 is disordered; that stretch reads YCRSKGGSTGEEKKSARRRRTVEEEDEEE. The VWFA domain occupies 193–382; that stretch reads GTEIAIVLDG…SKLQQHIVHM (190 aa). N-linked (GlcNAc...) asparagine glycosylation is found at asparagine 256, asparagine 314, asparagine 341, asparagine 364, asparagine 418, and asparagine 437. The stretch at 383–435 is one FG-GAP 3 repeat; it reads EGTVGDALQYQLAQTGFSAQILDKGQVLLGTVGAFNWSGGALLYSTQNGRGCF. 4 FG-GAP repeats span residues 438–491, 492–552, 555–619, and 623–683; these read QTAK…REED, AFVR…DASF, AHTL…GLYD, and QQIR…FTPD. The Ca(2+) site is built by aspartate 514, aspartate 516, aspartate 518, aspartate 522, aspartate 578, asparagine 580, aspartate 582, aspartate 586, aspartate 646, asparagine 648, aspartate 650, and aspartate 654. Cysteine 698 and cysteine 754 are oxidised to a cystine. Asparagine 718 and asparagine 773 each carry an N-linked (GlcNAc...) asparagine glycan. The cysteines at positions 814 and 820 are disulfide-linked. N-linked (GlcNAc...) asparagine glycans are attached at residues asparagine 829 and asparagine 846. An intrachain disulfide couples cysteine 884 to cysteine 898. N-linked (GlcNAc...) asparagine glycosylation is found at asparagine 911, asparagine 925, asparagine 968, and asparagine 1013. Intrachain disulfides connect cysteine 998-cysteine 1023 and cysteine 1031-cysteine 1047. Asparagine 1055 and asparagine 1086 each carry an N-linked (GlcNAc...) asparagine glycan. A helical transmembrane segment spans residues 1115 to 1137; the sequence is LPLIIGSSIGGLLVLVVIIAILF. Topologically, residues 1138–1167 are cytoplasmic; the sequence is KCGFFKRKYQQLNLESTRRAQLKADSLLQD. The short motif at 1140-1144 is the GFFKR motif element; it reads GFFKR.

It belongs to the integrin alpha chain family. In terms of assembly, heterodimer of an alpha and a beta subunit. The alpha subunit is composed of a heavy and a light chains linked by a disulfide bond. Alpha-E associates with beta-7.

It localises to the membrane. Functionally, integrin alpha-E/beta-7 is a receptor for E-cadherin. It mediates adhesion of intra-epithelial T-lymphocytes to epithelial cell monolayers. Mice expressing a null mutation of the alpha-E subunit gene exhibit a marked reduction in the numbers of intraepithelial lymphocytes in the gut and in the development of gut-associated lymphoid aggregates, supporting a specific role for this integrin in mediating retention of lymphocytes in the intestinal wall. The chain is Integrin alpha-E (Itgae) from Mus musculus (Mouse).